We begin with the raw amino-acid sequence, 246 residues long: uncharacterized protein (246 aa).

This sequence belongs to the BtpA family.

This is an uncharacterized protein from Archaeoglobus fulgidus (strain ATCC 49558 / DSM 4304 / JCM 9628 / NBRC 100126 / VC-16).